The following is a 219-amino-acid chain: Small ribosomal subunit protein uS3 (219 aa).

The region spanning 41 to 110 (IRKIINTEYS…DVSINICEVK (70 aa)) is the KH type-2 domain.

It belongs to the universal ribosomal protein uS3 family. In terms of assembly, part of the 30S ribosomal subunit. Forms a tight complex with proteins S10 and S14.

Binds the lower part of the 30S subunit head. Binds mRNA in the 70S ribosome, positioning it for translation. This Orientia tsutsugamushi (strain Ikeda) (Rickettsia tsutsugamushi) protein is Small ribosomal subunit protein uS3.